Consider the following 347-residue polypeptide: D-fructose 1,6-bisphosphatase class 2/sedoheptulose 1,7-bisphosphatase (347 aa).

Positions 33, 57, 97, and 100 each coordinate Mn(2+). Substrate is bound by residues 100-102, tyrosine 131, 176-178, and 198-200; these read EGT, RKR, and DGD. Mn(2+) is bound at residue glutamate 225.

The protein belongs to the FBPase class 2 family. In terms of assembly, homotetramer. Requires Mn(2+) as cofactor.

The enzyme catalyses beta-D-fructose 1,6-bisphosphate + H2O = beta-D-fructose 6-phosphate + phosphate. It catalyses the reaction D-sedoheptulose 1,7-bisphosphate + H2O = D-sedoheptulose 7-phosphate + phosphate. It participates in carbohydrate biosynthesis; Calvin cycle. Catalyzes the hydrolysis of fructose 1,6-bisphosphate (Fru 1,6-P2) and sedoheptulose 1,7-bisphosphate (Sed 1,7-P2) to fructose 6-phosphate and sedoheptulose 7-phosphate, respectively. The sequence is that of D-fructose 1,6-bisphosphatase class 2/sedoheptulose 1,7-bisphosphatase from Synechococcus sp. (strain JA-2-3B'a(2-13)) (Cyanobacteria bacterium Yellowstone B-Prime).